A 283-amino-acid chain; its full sequence is Dihydropteroate synthase (283 aa).

Positions 18-274 (PKIMGIVNLT…DVKATADALK (257 aa)) constitute a Pterin-binding domain. Residue Asn-25 coordinates Mg(2+). (7,8-dihydropterin-6-yl)methyl diphosphate-binding positions include Thr-66, Asp-99, Asn-119, Asp-190, Lys-227, and 262–264 (RVH).

Belongs to the DHPS family. Homodimer. Mg(2+) is required as a cofactor.

It carries out the reaction (7,8-dihydropterin-6-yl)methyl diphosphate + 4-aminobenzoate = 7,8-dihydropteroate + diphosphate. It functions in the pathway cofactor biosynthesis; tetrahydrofolate biosynthesis; 7,8-dihydrofolate from 2-amino-4-hydroxy-6-hydroxymethyl-7,8-dihydropteridine diphosphate and 4-aminobenzoate: step 1/2. In terms of biological role, catalyzes the condensation of para-aminobenzoate (pABA) with 6-hydroxymethyl-7,8-dihydropterin diphosphate (DHPt-PP) to form 7,8-dihydropteroate (H2Pte), the immediate precursor of folate derivatives. In Neisseria meningitidis serogroup C, this protein is Dihydropteroate synthase (folP).